Here is a 278-residue protein sequence, read N- to C-terminus: Elongation factor Ts 2, mitochondrial (278 aa).

This sequence belongs to the EF-Ts family.

The protein resides in the mitochondrion. Its function is as follows. Associates with the EF-Tu.GDP complex and induces the exchange of GDP to GTP. It remains bound to the aminoacyl-tRNA.EF-Tu.GTP complex up to the GTP hydrolysis stage on the ribosome. This chain is Elongation factor Ts 2, mitochondrial, found in Trypanosoma cruzi (strain CL Brener).